The primary structure comprises 1381 residues: EH domain-containing and endocytosis protein 1 (1381 aa).

2 consecutive EH domains span residues 14 to 113 and 135 to 227; these read EQAF…NPAP and DIAK…IRLE. EF-hand domains lie at 47-82 and 167-202; these read LPGQ…IAQL and LPNQ…IQLC. Ca(2+)-binding residues include Asp-180, Asp-182, Ser-184, and Glu-191. Thr-238 is modified (phosphothreonine). Phosphoserine occurs at positions 241 and 244. Phosphothreonine is present on Thr-245. 2 positions are modified to phosphoserine: Ser-248 and Ser-249. A Phosphothreonine modification is found at Thr-251. Ser-265 bears the Phosphoserine mark. The EF-hand 3 domain occupies 276 to 311; the sequence is EKKQQFDAIFDSLDKQHAGSLSSAVLVPFFLSSRLN. In terms of domain architecture, EH 3 spans 277–366; it reads KKQQFDAIFD…NELLQSPALG (90 aa). Positions 389–535 are disordered; that stretch reads SKPSLQDMPH…SSPVKRTAST (147 aa). Polar residues-rich tracts occupy residues 404–424 and 432–447; these read AVNT…NGSL and PSFS…TVVQ. Ser-419 is subject to Phosphoserine. Low complexity predominate over residues 448-470; that stretch reads NNTNNSFSYDNNNGQATLQQQQP. Residues Thr-450, Thr-477, and Thr-487 each carry the phosphothreonine modification. The segment covering 477-494 has biased composition (polar residues); sequence THSSSGLKKFTPTSNFGQ. Position 495 is a phosphoserine (Ser-495). A coiled-coil region spans residues 593–882; that stretch reads GEASAQLSNA…RELSERQMNL (290 aa). A Glycyl lysine isopeptide (Lys-Gly) (interchain with G-Cter in ubiquitin) cross-link involves residue Lys-674. Ser-848 carries the phosphoserine modification. The interval 898–919 is disordered; sequence SASNTDTTTKEATSRGNVHEDT. The span at 905 to 919 shows a compositional bias: basic and acidic residues; the sequence is TTKEATSRGNVHEDT. 6 positions are modified to phosphoserine: Ser-931, Ser-950, Ser-964, Ser-1008, Ser-1012, and Ser-1020. Disordered stretches follow at residues 933 to 1202, 1214 to 1285, and 1298 to 1322; these read LNVN…KDEF, VEED…QVSN, and SKAE…NDPI. Basic and acidic residues predominate over residues 937-957; that stretch reads RVKDDEEKTERTESDVFDRDV. Composition is skewed to polar residues over residues 960-989 and 1005-1019; these read LGSQ…LTET and RSQS…NAPQ. The segment covering 1021 to 1036 has biased composition (basic and acidic residues); that stretch reads VRDDVELPETLEERDT. Composition is skewed to polar residues over residues 1037 to 1049 and 1061 to 1073; these read INNT…TGNL and ATAS…NETT. Thr-1046 carries the phosphothreonine modification. 6 positions are modified to phosphoserine: Ser-1069, Ser-1087, Ser-1093, Ser-1095, Ser-1096, and Ser-1100. The span at 1093 to 1103 shows a compositional bias: polar residues; it reads SVSSIQESPKI. The residue at position 1111 (Thr-1111) is a Phosphothreonine. Positions 1127-1139 are enriched in acidic residues; sequence SDSSSSDDDEFED. Composition is skewed to polar residues over residues 1147–1164 and 1178–1195; these read TVKT…SSLE and TSPS…TNSI. Phosphoserine is present on residues Ser-1181 and Ser-1187. Acidic residues predominate over residues 1214–1226; the sequence is VEEDNGADSESEF. The tract at residues 1217 to 1381 is able to bind biological membranes; the sequence is DNGADSESEF…AATNFLLDSA (165 aa). Residues 1253–1285 are compositionally biased toward polar residues; that stretch reads NAFTGTLTSSSNPTIPKPQVQQQSTSDPAQVSN. Thr-1307 is modified (phosphothreonine). A Glycyl lysine isopeptide (Lys-Gly) (interchain with G-Cter in ubiquitin) cross-link involves residue Lys-1329. The region spanning 1338-1380 is the UBA domain; it reads ATTPKSLAVEELSGMGFTEEEAHNALEKCNWDLEAATNFLLDS. Position 1343 is a phosphoserine (Ser-1343).

The protein belongs to the VDP/USO1/EDE1 family. Interacts (via UBA domain) with monoubiquitin and ENT1 (via asparagine-proline-phenylalanine tripeptide motif called NPF). Interacts with PAL1 and SYP1.

The protein resides in the cytoplasm. Its function is as follows. Functions at the internalization step of the clathrin-mediated endocytosis (CME) as an early-acting scaffold protein. Requires clathrin adapter proteins, ENT1/2 and YAP1801/2, for normal spatiotemporal dynamics and viability. Binds to biological membranes in a ubiquitin-dependent manner. The protein is EH domain-containing and endocytosis protein 1 (EDE1) of Saccharomyces cerevisiae (strain ATCC 204508 / S288c) (Baker's yeast).